An 87-amino-acid chain; its full sequence is uncharacterized protein (87 aa).

The N-terminal stretch at 1–19 (MLVLQLAVLVTAVYAFVHA) is a signal peptide. Residues 51 to 71 (ILGFVFGVLGIVIAACAAGVY) traverse the membrane as a helical segment.

It to M.tuberculosis Rv0476.

The protein resides in the membrane. This is an uncharacterized protein from Mycobacterium leprae (strain TN).